The chain runs to 207 residues: Antitermination protein Q (207 aa).

Positions Met-1–Ser-28 are disordered. Residues Cys-118, Cys-121, Cys-144, and Cys-147 each coordinate Zn(2+). A zinc finger spans residues Cys-118 to Cys-147. The DNA-binding element occupies Leu-171–His-192.

Belongs to the phage antitermination Q type 2 family. In terms of assembly, interacts with host RPOB (via flap domain); this interaction renders host RNAP resistant to transcription pausing and allows it to read through termination signals. Interacts with host RNA polymerase sigma factor RPOD (via domain-4). Interacts with host NusA (via N-terminus and AR2 domain); this interaction releases the autoinhibition of NusA.

Functionally, mediates the switch from middle to viral late gene expression by associating with host RNA polymerase (RNAP) so that the latter can read without pausing and through transcription terminators preceding late genes. Competes with host factor sigma 70 for binding to RPOB, the beta-subunit of host RNAP. To join the elongation complex, binds a specific DNA Q-binding element (QBE) and interacts with RNAP that is paused during early elongation. Participates in the lysis-lysogeny decision by activating the expression of the late lytic genes. The polypeptide is Antitermination protein Q (23) (Salmonella typhimurium).